The following is a 453-amino-acid chain: UPF0210 protein Mbur_0828 (453 aa).

It belongs to the UPF0210 family.

The protein is UPF0210 protein Mbur_0828 of Methanococcoides burtonii (strain DSM 6242 / NBRC 107633 / OCM 468 / ACE-M).